We begin with the raw amino-acid sequence, 234 residues long: Sugar fermentation stimulation protein homolog (234 aa).

Belongs to the SfsA family.

The sequence is that of Sugar fermentation stimulation protein homolog from Shewanella baltica (strain OS195).